The primary structure comprises 414 residues: Esterase FrsA (414 aa).

It belongs to the FrsA family.

It carries out the reaction a carboxylic ester + H2O = an alcohol + a carboxylate + H(+). Catalyzes the hydrolysis of esters. The polypeptide is Esterase FrsA (Escherichia coli O157:H7).